A 302-amino-acid chain; its full sequence is Aspartate carbamoyltransferase catalytic subunit (302 aa).

Arginine 53 and threonine 54 together coordinate carbamoyl phosphate. Lysine 82 is a binding site for L-aspartate. 3 residues coordinate carbamoyl phosphate: arginine 103, histidine 131, and glutamine 134. The L-aspartate site is built by arginine 164 and arginine 223. Carbamoyl phosphate is bound by residues leucine 260 and proline 261.

Belongs to the aspartate/ornithine carbamoyltransferase superfamily. ATCase family. In terms of assembly, heterooligomer of catalytic and regulatory chains.

It catalyses the reaction carbamoyl phosphate + L-aspartate = N-carbamoyl-L-aspartate + phosphate + H(+). Its pathway is pyrimidine metabolism; UMP biosynthesis via de novo pathway; (S)-dihydroorotate from bicarbonate: step 2/3. Functionally, catalyzes the condensation of carbamoyl phosphate and aspartate to form carbamoyl aspartate and inorganic phosphate, the committed step in the de novo pyrimidine nucleotide biosynthesis pathway. This is Aspartate carbamoyltransferase catalytic subunit from Methanococcus maripaludis (strain C6 / ATCC BAA-1332).